Reading from the N-terminus, the 185-residue chain is Ribosome-recycling factor (185 aa).

It belongs to the RRF family.

The protein resides in the cytoplasm. Functionally, responsible for the release of ribosomes from messenger RNA at the termination of protein biosynthesis. May increase the efficiency of translation by recycling ribosomes from one round of translation to another. This is Ribosome-recycling factor from Vesicomyosocius okutanii subsp. Calyptogena okutanii (strain HA).